A 710-amino-acid polypeptide reads, in one-letter code: Early transcription factor 82 kDa subunit (710 aa).

The protein belongs to the poxviridae VETF large subunit family. As to quaternary structure, heterodimer of a 70 kDa and a 82 kDa subunit. Part of the early transcription complex composed of ETF, RAP94/OPG109, and the DNA-directed RNA polymerase.

It is found in the virion. In terms of biological role, acts with RNA polymerase to initiate transcription from early gene promoters. Is recruited by the RPO-associated protein of 94 kDa RAP94/OPG109 to form the early transcription complex, which also contains the core RNA polymerase. ETF heterodimer binds to early gene promoters. This chain is Early transcription factor 82 kDa subunit (OPG133), found in Vaccinia virus (strain Ankara) (VACV).